The following is a 1136-amino-acid chain: Carbamoyl phosphate synthase large chain (1136 aa).

Residues 1 to 402 (MPKRTDIKSV…SLGKAMRSID (402 aa)) are carboxyphosphate synthetic domain. Positions 129, 169, 175, 176, 208, 210, 215, 241, 242, 243, 285, and 299 each coordinate ATP. Residues 133 to 328 (KKVVKEAGAE…IAKIATKLAL (196 aa)) form the ATP-grasp 1 domain. Mg(2+) contacts are provided by Gln285, Glu299, and Asn301. Gln285, Glu299, and Asn301 together coordinate Mn(2+). The oligomerization domain stretch occupies residues 403–551 (KRHMGFSWDG…YYYSCYADET (149 aa)). A carbamoyl phosphate synthetic domain region spans residues 552–962 (ELRKREREAV…AFAKSQLASY (411 aa)). Positions 681-881 (GEVLRQEHLN…LAKAAARIMA (201 aa)) constitute an ATP-grasp 2 domain. Positions 717, 765, 767, 772, 797, 798, 799, 800, 840, and 852 each coordinate ATP. Residues Gln840, Glu852, and Asn854 each contribute to the Mg(2+) site. Residues Gln840, Glu852, and Asn854 each contribute to the Mn(2+) site. Residues 963-1136 (EGGLPTNGNV…KEEGEEARAQ (174 aa)) are allosteric domain. The 159-residue stretch at 964–1122 (GGLPTNGNVF…QEHSRELYEL (159 aa)) folds into the MGS-like domain.

This sequence belongs to the CarB family. As to quaternary structure, composed of two chains; the small (or glutamine) chain promotes the hydrolysis of glutamine to ammonia, which is used by the large (or ammonia) chain to synthesize carbamoyl phosphate. Tetramer of heterodimers (alpha,beta)4. Mg(2+) serves as cofactor. Mn(2+) is required as a cofactor.

The enzyme catalyses hydrogencarbonate + L-glutamine + 2 ATP + H2O = carbamoyl phosphate + L-glutamate + 2 ADP + phosphate + 2 H(+). The catalysed reaction is hydrogencarbonate + NH4(+) + 2 ATP = carbamoyl phosphate + 2 ADP + phosphate + 2 H(+). Its pathway is amino-acid biosynthesis; L-arginine biosynthesis; carbamoyl phosphate from bicarbonate: step 1/1. The protein operates within pyrimidine metabolism; UMP biosynthesis via de novo pathway; (S)-dihydroorotate from bicarbonate: step 1/3. Functionally, large subunit of the glutamine-dependent carbamoyl phosphate synthetase (CPSase). CPSase catalyzes the formation of carbamoyl phosphate from the ammonia moiety of glutamine, carbonate, and phosphate donated by ATP, constituting the first step of 2 biosynthetic pathways, one leading to arginine and/or urea and the other to pyrimidine nucleotides. The large subunit (synthetase) binds the substrates ammonia (free or transferred from glutamine from the small subunit), hydrogencarbonate and ATP and carries out an ATP-coupled ligase reaction, activating hydrogencarbonate by forming carboxy phosphate which reacts with ammonia to form carbamoyl phosphate. This chain is Carbamoyl phosphate synthase large chain, found in Bifidobacterium animalis subsp. lactis (strain AD011).